Consider the following 994-residue polypeptide: E3 ubiquitin-protein ligase Arkadia (994 aa).

Residues Lys-19, Lys-28, Lys-34, Lys-47, Lys-59, Lys-73, Lys-87, Lys-96, and Lys-110 each participate in a glycyl lysine isopeptide (Lys-Gly) (interchain with G-Cter in SUMO2) cross-link. Positions 66-89 are enriched in basic and acidic residues; that stretch reads HLCDDSQKQEKEMNGNQQEQEKSL. Residues 66 to 106 are disordered; it reads HLCDDSQKQEKEMNGNQQEQEKSLVVRKKRKSQQAGPSYVQ. The tract at residues 120-191 is disordered; the sequence is QHLGTPSDED…HKWPRTETES (72 aa). Low complexity predominate over residues 132-151; it reads SSFSDCLSSPSSSLHFGDSD. The span at 164–173 shows a compositional bias: polar residues; the sequence is RHSQTILNAK. Lys-173 is covalently cross-linked (Glycyl lysine isopeptide (Lys-Gly) (interchain with G-Cter in SUMO2)). The segment covering 174–184 has biased composition (basic residues); sequence SRSHSARSHKW. Glycyl lysine isopeptide (Lys-Gly) (interchain with G-Cter in SUMO2) cross-links involve residues Lys-198 and Lys-218. The interval 212–277 is disordered; that stretch reads CRKRFVKNNS…SSSTEGEEDL (66 aa). Positions 234-247 are enriched in basic residues; that stretch reads MQRKKREVLARRKY. The interval 241–404 is interaction with AXIN1; that stretch reads VLARRKYALL…VPTTSARMES (164 aa). Residues 252–271 are compositionally biased toward low complexity; that stretch reads SSSSSSENDLSSESSSSSST. Residues 300–304 carry the SUMO interaction motif 1 (SIM) motif; sequence VVVIE. An SUMO interaction motif 2 (SIM) motif is present at residues 325–331; the sequence is EVEIVTV. The tract at residues 337-371 is disordered; the sequence is SRSTLGHSRSHWSQGSSSHASRPQEPRNRSRISTV. Positions 347 to 357 are enriched in low complexity; the sequence is HWSQGSSSHAS. The SUMO interaction motif 3 (SIM) motif lies at 382–386; sequence VVDLT. Disordered regions lie at residues 388-476, 508-537, 610-684, and 696-742; these read DEDE…AMPR, HGHH…DPAC, APSQ…VDYV, and ISSH…APPA. Over residues 395 to 467 the composition is skewed to polar residues; it reads VPTTSARMES…SRRTTSSAVT (73 aa). A compositionally biased stretch (basic residues) spans 508 to 522; that stretch reads HGHHFQHHHHHHHTP. Over residues 670–680 the composition is skewed to pro residues; it reads NPPPQTQPPPQ. Positions 907 to 909 are ubiquitin binding; sequence YPH. Glycyl lysine isopeptide (Lys-Gly) (interchain with G-Cter in SUMO2) cross-links involve residues Lys-923 and Lys-927. Zn(2+) contacts are provided by Cys-942 and Cys-945. Residues 942-983 form an RING-type; atypical zinc finger; that stretch reads CTICLSILEEGEDVRRLPCMHLFHQVCVDQWLITNKKCPICR. The interval 957–961 is ubiquitin binding; sequence RLPCM. Residues His-965 and Cys-968 each coordinate Zn(2+).

Belongs to the Arkadia family. In terms of assembly, monomer. Interacts with SMAD6, SMAD7, AXIN1, AXIN2 and SKIL isoform SNON. Interacts with (phosphorylated) SMAD2 and SMAD3. Part of a complex containing RNF111, AXIN1 and SMAD7. Interacts (via SIM domains) with SUMO1 and SUMO2. As to expression, broadly expressed.

Its subcellular location is the nucleus. The protein resides in the cytoplasm. The protein localises to the PML body. It catalyses the reaction S-ubiquitinyl-[E2 ubiquitin-conjugating enzyme]-L-cysteine + [acceptor protein]-L-lysine = [E2 ubiquitin-conjugating enzyme]-L-cysteine + N(6)-ubiquitinyl-[acceptor protein]-L-lysine.. The protein operates within protein modification; protein ubiquitination. Binds free ubiquitin non-covalently via its RING-type zinc finger. Ubiquitin-binding leads to enhance the E3 ubiquitin-protein ligase activity by stabilizing the ubiquitin-conjugating enzyme E2 (donor ubiquitin) in the 'closed' conformation and activating ubiquitin transfer. In terms of biological role, E3 ubiquitin-protein ligase. Required for mesoderm patterning during embryonic development. Acts as an enhancer of the transcriptional responses of the SMAD2/SMAD3 effectors, which are activated downstream of BMP. Acts by mediating ubiquitination and degradation of SMAD inhibitors such as SMAD7, inducing their proteasomal degradation and thereby enhancing the transcriptional activity of TGF-beta and BMP. In addition to enhance transcription of SMAD2/SMAD3 effectors, also regulates their turnover by mediating their ubiquitination and subsequent degradation, coupling their activation with degradation, thereby ensuring that only effectors 'in use' are degraded. Activates SMAD3/SMAD4-dependent transcription by triggering signal-induced degradation of SNON isoform of SKIL. Associates with UBE2D2 as an E2 enzyme. Specifically binds polysumoylated chains via SUMO interaction motifs (SIMs) and mediates ubiquitination of sumoylated substrates. Catalyzes 'Lys-63'-linked ubiquitination of sumoylated XPC in response to UV irradiation, promoting nucleotide excision repair. Mediates ubiquitination and degradation of sumoylated PML. The regulation of the BMP-SMAD signaling is however independent of sumoylation and is not dependent of SUMO interaction motifs (SIMs). In Homo sapiens (Human), this protein is E3 ubiquitin-protein ligase Arkadia.